Here is a 459-residue protein sequence, read N- to C-terminus: Putrescine aminotransferase (459 aa).

Pyridoxal 5'-phosphate is bound by residues 150 to 151 (GT) and glutamine 274. Lysine 300 bears the N6-(pyridoxal phosphate)lysine mark. Threonine 332 is a binding site for pyridoxal 5'-phosphate.

Belongs to the class-III pyridoxal-phosphate-dependent aminotransferase family. Putrescine aminotransferase subfamily. It depends on pyridoxal 5'-phosphate as a cofactor.

It carries out the reaction an alkane-alpha,omega-diamine + 2-oxoglutarate = an omega-aminoaldehyde + L-glutamate. The catalysed reaction is putrescine + 2-oxoglutarate = 1-pyrroline + L-glutamate + H2O. It catalyses the reaction cadaverine + 2-oxoglutarate = 5-aminopentanal + L-glutamate. It participates in amine and polyamine degradation; putrescine degradation; 4-aminobutanal from putrescine (transaminase route): step 1/1. Catalyzes the aminotransferase reaction from putrescine to 2-oxoglutarate, leading to glutamate and 4-aminobutanal, which spontaneously cyclizes to form 1-pyrroline. This is the first step in one of two pathways for putrescine degradation, where putrescine is converted into 4-aminobutanoate (gamma-aminobutyrate or GABA) via 4-aminobutanal. Also functions as a cadaverine transaminase in a a L-lysine degradation pathway to succinate that proceeds via cadaverine, glutarate and L-2-hydroxyglutarate. This chain is Putrescine aminotransferase, found in Salmonella agona (strain SL483).